The following is a 341-amino-acid chain: Heat-inducible transcription repressor HrcA (341 aa).

The protein belongs to the HrcA family.

Functionally, negative regulator of class I heat shock genes (grpE-dnaK-dnaJ and groELS operons). Prevents heat-shock induction of these operons. This chain is Heat-inducible transcription repressor HrcA, found in Corynebacterium glutamicum (strain ATCC 13032 / DSM 20300 / JCM 1318 / BCRC 11384 / CCUG 27702 / LMG 3730 / NBRC 12168 / NCIMB 10025 / NRRL B-2784 / 534).